A 164-amino-acid chain; its full sequence is Leucine-rich single-pass membrane protein 2 (164 aa).

Residues 97 to 117 (GFLLLLALLVLTCLVLALLAV) traverse the membrane as a helical segment.

Its subcellular location is the membrane. The polypeptide is Leucine-rich single-pass membrane protein 2 (LSMEM2) (Homo sapiens (Human)).